Here is a 238-residue protein sequence, read N- to C-terminus: Protein shisa-3 homolog (238 aa).

Positions 1-21 (MRALLALCLLLGWLRWGPAGA) are cleaved as a signal peptide. The Lumenal portion of the chain corresponds to 22 to 98 (QQSGEYCHGW…GITAQPVYVP (77 aa)). The chain crosses the membrane as a helical span at residues 99–119 (FLIVGSIFIAFIILGSVVAIY). Residues 120–238 (CCTCLRPKEP…GKSCPDFSSS (119 aa)) lie on the Cytoplasmic side of the membrane. The disordered stretch occupies residues 151–173 (TSTSPRAPSRQSSTATSSSSTGG). The span at 159–173 (SRQSSTATSSSSTGG) shows a compositional bias: low complexity.

Belongs to the shisa family.

It is found in the endoplasmic reticulum membrane. Plays an essential role in the maturation of presomitic mesoderm cells by individual attenuation of both FGF and WNT signaling. The sequence is that of Protein shisa-3 homolog (SHISA3) from Homo sapiens (Human).